We begin with the raw amino-acid sequence, 341 residues long: L-threonine 3-dehydrogenase (341 aa).

Cys-38 serves as a coordination point for Zn(2+). Active-site charge relay system residues include Thr-40 and His-43. Residues His-63, Glu-64, Cys-93, Cys-96, Cys-99, and Cys-107 each coordinate Zn(2+). NAD(+) is bound by residues Ile-175, Asp-195, Arg-200, 262–264, and 286–287; these read LGI and IY.

This sequence belongs to the zinc-containing alcohol dehydrogenase family. Homotetramer. It depends on Zn(2+) as a cofactor.

It localises to the cytoplasm. It catalyses the reaction L-threonine + NAD(+) = (2S)-2-amino-3-oxobutanoate + NADH + H(+). Its pathway is amino-acid degradation; L-threonine degradation via oxydo-reductase pathway; glycine from L-threonine: step 1/2. In terms of biological role, catalyzes the NAD(+)-dependent oxidation of L-threonine to 2-amino-3-ketobutyrate. The sequence is that of L-threonine 3-dehydrogenase from Solibacter usitatus (strain Ellin6076).